The primary structure comprises 156 residues: Rhombotin-1 (156 aa).

LIM zinc-binding domains are found at residues 22 to 84 (KGCA…LFGT) and 86 to 148 (GNCA…GHLN).

As to expression, expressed in the brain and not in the thymus.

The protein resides in the nucleus. Its function is as follows. May be involved in gene regulation within neural lineage cells potentially by direct DNA binding or by binding to other transcription factors. The polypeptide is Rhombotin-1 (Lmo1) (Mus musculus (Mouse)).